A 264-amino-acid chain; its full sequence is tRNA pseudouridine synthase A (264 aa).

The active-site Nucleophile is the D51. Y109 is a substrate binding site.

The protein belongs to the tRNA pseudouridine synthase TruA family. As to quaternary structure, homodimer.

It carries out the reaction uridine(38/39/40) in tRNA = pseudouridine(38/39/40) in tRNA. Formation of pseudouridine at positions 38, 39 and 40 in the anticodon stem and loop of transfer RNAs. The polypeptide is tRNA pseudouridine synthase A (Yersinia pseudotuberculosis serotype O:1b (strain IP 31758)).